A 399-amino-acid chain; its full sequence is Methylthioribose kinase (399 aa).

ATP-binding positions include Asn40, Lys57, and 111-113; that span reads EDL. Asp229 contacts substrate. 246–248 contributes to the ATP binding site; it reads DAE. Position 344 (Arg344) interacts with substrate.

This sequence belongs to the methylthioribose kinase family. Homodimer.

It catalyses the reaction 5-(methylsulfanyl)-D-ribose + ATP = 5-(methylsulfanyl)-alpha-D-ribose 1-phosphate + ADP + H(+). Its pathway is amino-acid biosynthesis; L-methionine biosynthesis via salvage pathway; S-methyl-5-thio-alpha-D-ribose 1-phosphate from S-methyl-5'-thioadenosine (hydrolase route): step 2/2. In terms of biological role, catalyzes the phosphorylation of methylthioribose into methylthioribose-1-phosphate. In Klebsiella pneumoniae subsp. pneumoniae (strain ATCC 700721 / MGH 78578), this protein is Methylthioribose kinase.